The chain runs to 220 residues: Large ribosomal subunit protein uL3 (220 aa).

The disordered stretch occupies residues 145-169 (GPASHGSKFHRRPGSSGNRTWPGRV).

It belongs to the universal ribosomal protein uL3 family. As to quaternary structure, part of the 50S ribosomal subunit. Forms a cluster with proteins L14 and L19.

In terms of biological role, one of the primary rRNA binding proteins, it binds directly near the 3'-end of the 23S rRNA, where it nucleates assembly of the 50S subunit. This Bdellovibrio bacteriovorus (strain ATCC 15356 / DSM 50701 / NCIMB 9529 / HD100) protein is Large ribosomal subunit protein uL3.